Here is a 177-residue protein sequence, read N- to C-terminus: ATP-dependent protease subunit HslV (177 aa).

Residue Thr2 is part of the active site. Residues Gly157, Cys160, and Thr163 each contribute to the Na(+) site.

It belongs to the peptidase T1B family. HslV subfamily. As to quaternary structure, a double ring-shaped homohexamer of HslV is capped on each side by a ring-shaped HslU homohexamer. The assembly of the HslU/HslV complex is dependent on binding of ATP.

It localises to the cytoplasm. The enzyme catalyses ATP-dependent cleavage of peptide bonds with broad specificity.. Allosterically activated by HslU binding. In terms of biological role, protease subunit of a proteasome-like degradation complex believed to be a general protein degrading machinery. In Aeromonas hydrophila subsp. hydrophila (strain ATCC 7966 / DSM 30187 / BCRC 13018 / CCUG 14551 / JCM 1027 / KCTC 2358 / NCIMB 9240 / NCTC 8049), this protein is ATP-dependent protease subunit HslV.